The primary structure comprises 105 residues: Large ribosomal subunit protein bL21 (105 aa).

Belongs to the bacterial ribosomal protein bL21 family. As to quaternary structure, part of the 50S ribosomal subunit. Contacts protein L20.

Its function is as follows. This protein binds to 23S rRNA in the presence of protein L20. This chain is Large ribosomal subunit protein bL21, found in Rickettsia peacockii (strain Rustic).